Here is a 71-residue protein sequence, read N- to C-terminus: Prokaryotic ubiquitin-like protein Pup (71 aa).

The segment covering 1-18 has biased composition (low complexity); that stretch reads MATRDSGGQSQTGRSQQG. The interval 1–42 is disordered; sequence MATRDSGGQSQTGRSQQGEEIEDVTTEASPEVAERHAEITED. The tract at residues 27 to 65 is ARC ATPase binding; the sequence is EASPEVAERHAEITEDVDDLLDEIDSVLEENAEEFVRGY. Residues 31 to 60 adopt a coiled-coil conformation; sequence EVAERHAEITEDVDDLLDEIDSVLEENAEE. An Isoglutamyl lysine isopeptide (Glu-Lys) (interchain with K-? in acceptor proteins) cross-link involves residue Glu71.

It belongs to the prokaryotic ubiquitin-like protein family. As to quaternary structure, strongly interacts with the proteasome-associated ATPase ARC through a hydrophobic interface; the interacting region of Pup lies in its C-terminal half. There is one Pup binding site per ARC hexamer ring.

Its pathway is protein degradation; proteasomal Pup-dependent pathway. In terms of biological role, protein modifier that is covalently attached to lysine residues of substrate proteins, thereby targeting them for proteasomal degradation. The tagging system is termed pupylation. This chain is Prokaryotic ubiquitin-like protein Pup, found in Salinispora arenicola (strain CNS-205).